Reading from the N-terminus, the 167-residue chain is Bacterial non-heme ferritin (167 aa).

The Ferritin-like diiron domain maps to 1–145 (MLSKDIIKLL…DILDKIELIG (145 aa)). The Fe cation site is built by Glu-17, Glu-50, His-53, Glu-94, and Gln-127.

Belongs to the ferritin family. Prokaryotic subfamily. In terms of assembly, homooligomer of 24 subunits that assemble into a spherical protein shell (12 +/- 1 nM diameter) that can sequester at least 2000 iron atoms.

The protein localises to the cytoplasm. The catalysed reaction is 4 Fe(2+) + O2 + 6 H2O = 4 iron(III) oxide-hydroxide + 12 H(+). Iron-storage protein. The sequence is that of Bacterial non-heme ferritin (ftnA) from Helicobacter pylori (strain J99 / ATCC 700824) (Campylobacter pylori J99).